The chain runs to 603 residues: Probable methyltransferase PMT20 (603 aa).

Topologically, residues 1–16 (MKSGKQSSQPEKGTSR) are cytoplasmic. Residues 17–37 (ILSLTVLFIAFCGFSFYLGGI) traverse the membrane as a helical; Signal-anchor for type II membrane protein segment. Residues 38–603 (FCSERDKIVA…KLWFSSNQTS (566 aa)) lie on the Lumenal side of the membrane. 2 N-linked (GlcNAc...) asparagine glycosylation sites follow: N313 and N600.

It belongs to the methyltransferase superfamily.

The protein localises to the golgi apparatus membrane. The polypeptide is Probable methyltransferase PMT20 (Arabidopsis thaliana (Mouse-ear cress)).